The primary structure comprises 149 residues: UPF0756 membrane protein BBR47_12340 (149 aa).

The next 4 helical transmembrane spans lie at 6–26 (IILL…LVYA), 48–68 (PMFH…IAKG), 86–106 (IAIL…SILP), and 120–140 (LLAV…AGCI).

Belongs to the UPF0756 family.

It localises to the cell membrane. In Brevibacillus brevis (strain 47 / JCM 6285 / NBRC 100599), this protein is UPF0756 membrane protein BBR47_12340.